Reading from the N-terminus, the 310-residue chain is Vomeronasal type-1 receptor 97 (310 aa).

Residues 1-19 lie on the Extracellular side of the membrane; the sequence is MNKDNILHTDTNIKITLFS. The helical transmembrane segment at 20–40 threads the bilayer; sequence EVSIGISANSALFFSHLFMLF. Residues 41 to 49 lie on the Cytoplasmic side of the membrane; that stretch reads EKNRSKPID. A helical transmembrane segment spans residues 50 to 70; sequence LYIAFLSLTQLMLLITIGLIA. The Extracellular segment spans residues 71–93; sequence ADMFMSRGRWDSTTCQSLIYLHR. Cysteine 85 and cysteine 172 are disulfide-bonded. Residues 94-114 form a helical membrane-spanning segment; the sequence is LLRGFTLCATCLLNVLWTITL. At 115-131 the chain is on the cytoplasmic side; sequence SPRSSCLTTFKHKSPHH. Residues 132–152 traverse the membrane as a helical segment; the sequence is ISGAFLFFCVLYISFGSHLFL. At 153–190 the chain is on the extracellular side; that stretch reads STIATPNLTSDNFMYVTQSCSFLPMSYSRTSMFSTPMA. The N-linked (GlcNAc...) asparagine glycan is linked to asparagine 159. Residues 191-211 traverse the membrane as a helical segment; sequence IREALLIGLIGLSSGYMVAFL. The Cytoplasmic portion of the chain corresponds to 212–238; the sequence is WRHKNQARHLHSTSLSSKVSPEQRATR. A helical membrane pass occupies residues 239–259; that stretch reads TIMILMSFFVVLYILENVVFY. Residues 260 to 269 are Extracellular-facing; that stretch reads SRMTFKDGSM. The chain crosses the membrane as a helical span at residues 270 to 290; that stretch reads FYCVQIIVSHSYATISPFVFI. At 291-310 the chain is on the cytoplasmic side; the sequence is CTEKRIIKLWGSMSSRIVSI.

This sequence belongs to the G-protein coupled receptor 1 family. Expressed in 1-4% of neurons of the vomeronasal organ. Only one pheromone receptor gene may be expressed in a particular neuron. Not expressed in the main olfactory epithelium.

Its subcellular location is the cell membrane. Its function is as follows. Putative pheromone receptor implicated in the regulation of social as well as reproductive behavior. The sequence is that of Vomeronasal type-1 receptor 97 (Vom1r97) from Rattus norvegicus (Rat).